The sequence spans 246 residues: Fasciclin-like arabinogalactan protein 11 (246 aa).

Positions 1–24 are cleaved as a signal peptide; sequence MATSRTFIFSNLFIFFLVIATTYG. The 146-residue stretch at 34–179 folds into the FAS1 domain; sequence PTNITAILEK…LAVYQVDQVL (146 aa). Residues N36, N68, N141, and N150 are each glycosylated (N-linked (GlcNAc...) asparagine). Positions 193-222 are disordered; sequence PAPEKGGSVSKGSASGGDDGGDSTDSSDAE. Residue S219 is the site of GPI-anchor amidated serine attachment. A propeptide spans 220-246 (removed in mature form); the sequence is DAERTGFGFGIRITTVAAIAASSSLWI.

It belongs to the fasciclin-like AGP family. In terms of tissue distribution, expressed in the sclerenchyma cells of inflorescence stems and siliques.

It localises to the cell membrane. Its function is as follows. May be a cell surface adhesion protein. The protein is Fasciclin-like arabinogalactan protein 11 (FLA11) of Arabidopsis thaliana (Mouse-ear cress).